The primary structure comprises 605 residues: Methyl-CpG-binding domain protein 1 (605 aa).

The region spanning 1 to 69 (MAEDWLDCPA…TLFDFKQGIL (69 aa)) is the MBD domain. A disordered region spans residues 80 to 123 (AVASKKRKKPSRPAKTRKRQVGPQSGEVRKEAPRDETKADTDTA). Over residues 83–99 (SKKRKKPSRPAKTRKRQ) the composition is skewed to basic residues. The Nuclear localization signal motif lies at 84–88 (KKRKK). The segment covering 106–120 (EVRKEAPRDETKADT) has biased composition (basic and acidic residues). K117 is covalently cross-linked (Glycyl lysine isopeptide (Lys-Gly) (interchain with G-Cter in SUMO2)). CXXC-type zinc fingers lie at residues 169-216 (RMFK…RRCL) and 217-263 (RIVE…RRCL). C176, C179, C182, C188, C191, C194, C210, C215, C225, C228, C231, C237, C240, C243, C257, and C262 together coordinate Zn(2+). The tract at residues 269–308 (RRKGGCDSKMAARRRPGAQPLPPPPPSQSPEPTEPHPRAL) is disordered. A Glycyl lysine isopeptide (Lys-Gly) (interchain with G-Cter in SUMO2) cross-link involves residue K277. Residues 287–297 (QPLPPPPPSQS) are compositionally biased toward pro residues. A Phosphoserine modification is found at S297. A CXXC-type 3 zinc finger spans residues 330 to 378 (TNRRQNRKCGACAACLRRMDCGRCDFCCDKPKFGGSNQKRQKCRWRQCL). Residues C338, C341, C344, C350, C353, C356, C372, and C377 each coordinate Zn(2+). A phosphoserine mark is found at S391 and S399. Residues 391–451 (SESEDGAGSP…EAGGGFVLPP (61 aa)) form a disordered region. Basic residues predominate over residues 403-417 (YRRRKRPSSARRHHL). K422 participates in a covalent cross-link: Glycyl lysine isopeptide (Lys-Gly) (interchain with G-Cter in SUMO2). Residues 426-439 (ATRTAQPDHTQAPT) show a composition bias toward polar residues. A Glycyl lysine isopeptide (Lys-Gly) (interchain with G-Cter in SUMO2) cross-link involves residue K440. Residues K499 and K538 each participate in a glycyl lysine isopeptide (Lys-Gly) (interchain with G-Cter in SUMO2); alternate cross-link. The disordered stretch occupies residues 520 to 573 (VLVPGCPSKAVDPGLPSVKQEPPDPEEDKEENKDDSASKLAPEEEAGGAGTPVI). The tract at residues 529-592 (AVDPGLPSVK…RFRDTAVWLP (64 aa)) is transcriptional repression domain (TRD). Residue K558 forms a Glycyl lysine isopeptide (Lys-Gly) (interchain with G-Cter in SUMO2) linkage.

In terms of assembly, interacts with OASL, ATF7IP, ATF7IP2 and BAHD1. Binds CHAF1A and the SUV39H1-CBX5 complex via the MBD domain. Binds MGP via the TRD domain. May be part of the MeCP1 complex. Post-translationally, sumoylated, sumoylation may increase interaction with ATF7IP. As to expression, widely expressed.

The protein resides in the nucleus. It is found in the nucleus matrix. The protein localises to the nucleus speckle. It localises to the chromosome. Transcriptional repressor that binds CpG islands in promoters where the DNA is methylated at position 5 of cytosine within CpG dinucleotides. Binding is abolished by the presence of 7-mG that is produced by DNA damage by methylmethanesulfonate (MMS). Acts as transcriptional repressor and plays a role in gene silencing by recruiting ATF7IP, which in turn recruits factors such as the histone methyltransferase SETDB1. Probably forms a complex with SETDB1 and ATF7IP that represses transcription and couples DNA methylation and histone 'Lys-9' trimethylation. Isoform 1 and isoform 2 can also repress transcription from unmethylated promoters. The protein is Methyl-CpG-binding domain protein 1 of Homo sapiens (Human).